A 452-amino-acid polypeptide reads, in one-letter code: MFIDRAKIYVKGGDGGNGIVAFRREKYVPDGGPSGGDGGKGGNVILEVDPGLKSLMDYKYNIHIKGKRGEHGQGSNQHGKSGQDKVIKVPPGTVVKEATSGKVLADLVHEHDSYIAAEGGRGGRGNTRFANPKNKAPRFSEDGKPGEEKWIVLELKVMAEVGLIGYPNVGKSTLLSQVTKASPKIDSYHFTTLNPNLGVVELEEGSRFVMADIPGLIEGAHQGRGLGDQFLRHIERTKMLIHVIDIASIEGRDPVLDIETINEELKGYNSRVMDKPQVIAANKMDLGDQAEENLQRLLDKVNSDEILIPEQYKKIFPISAATGEGLRELLDFVAEKVAQLPDTHDTFDIDLELPESEENTDTEQEALFTMSQDDKIEEKPKSDFGIRKEGDIFIVKHEKLEKILNEIDVHTEKGRHYFQAKVDEFGLEEALVDKGIKPGDTVKIGNVEFEYQ.

Residues 1-158 form the Obg domain; the sequence is MFIDRAKIYV…KWIVLELKVM (158 aa). 2 disordered regions span residues 66 to 87 and 117 to 143; these read GKRG…DKVI and AEGG…SEDG. In terms of domain architecture, OBG-type G spans 159–338; it reads AEVGLIGYPN…LLDFVAEKVA (180 aa). Residues 165-172, 190-194, 212-215, 282-285, and 319-321 each bind GTP; these read GYPNVGKS, FTTLN, DIPG, NKMD, and SAA. The Mg(2+) site is built by Ser172 and Thr192. An OCT domain is found at 376–452; that stretch reads IEEKPKSDFG…KIGNVEFEYQ (77 aa).

It belongs to the TRAFAC class OBG-HflX-like GTPase superfamily. OBG GTPase family. As to quaternary structure, monomer. Mg(2+) is required as a cofactor.

The protein localises to the cytoplasm. Functionally, an essential GTPase which binds GTP, GDP and possibly (p)ppGpp with moderate affinity, with high nucleotide exchange rates and a fairly low GTP hydrolysis rate. Plays a role in control of the cell cycle, stress response, ribosome biogenesis and in those bacteria that undergo differentiation, in morphogenesis control. In Natranaerobius thermophilus (strain ATCC BAA-1301 / DSM 18059 / JW/NM-WN-LF), this protein is GTPase Obg.